A 142-amino-acid chain; its full sequence is Transcriptional regulator MraZ (142 aa).

2 consecutive SpoVT-AbrB domains span residues 5–47 and 76–119; these read EYQH…PLDE and ACEV…SKEK.

This sequence belongs to the MraZ family. Forms oligomers.

It is found in the cytoplasm. Its subcellular location is the nucleoid. This Clostridium beijerinckii (strain ATCC 51743 / NCIMB 8052) (Clostridium acetobutylicum) protein is Transcriptional regulator MraZ.